A 453-amino-acid chain; its full sequence is Serine--tRNA ligase (453 aa).

252–254 (TAE) is an L-serine binding site. ATP contacts are provided by residues 283 to 285 (RKE) and Val-299. Glu-306 contacts L-serine. 370 to 373 (EMVS) provides a ligand contact to ATP. Residue Thr-405 participates in L-serine binding.

It belongs to the class-II aminoacyl-tRNA synthetase family. Type-1 seryl-tRNA synthetase subfamily. Homodimer. The tRNA molecule binds across the dimer.

The protein localises to the cytoplasm. The catalysed reaction is tRNA(Ser) + L-serine + ATP = L-seryl-tRNA(Ser) + AMP + diphosphate + H(+). It carries out the reaction tRNA(Sec) + L-serine + ATP = L-seryl-tRNA(Sec) + AMP + diphosphate + H(+). The protein operates within aminoacyl-tRNA biosynthesis; selenocysteinyl-tRNA(Sec) biosynthesis; L-seryl-tRNA(Sec) from L-serine and tRNA(Sec): step 1/1. Functionally, catalyzes the attachment of serine to tRNA(Ser). Is also able to aminoacylate tRNA(Sec) with serine, to form the misacylated tRNA L-seryl-tRNA(Sec), which will be further converted into selenocysteinyl-tRNA(Sec). The sequence is that of Serine--tRNA ligase from Sulfurisphaera tokodaii (strain DSM 16993 / JCM 10545 / NBRC 100140 / 7) (Sulfolobus tokodaii).